A 282-amino-acid polypeptide reads, in one-letter code: Bifunctional protein FolD (282 aa).

NADP(+) contacts are provided by residues G165–S167, S190, and T231.

This sequence belongs to the tetrahydrofolate dehydrogenase/cyclohydrolase family. Homodimer.

It catalyses the reaction (6R)-5,10-methylene-5,6,7,8-tetrahydrofolate + NADP(+) = (6R)-5,10-methenyltetrahydrofolate + NADPH. The enzyme catalyses (6R)-5,10-methenyltetrahydrofolate + H2O = (6R)-10-formyltetrahydrofolate + H(+). The protein operates within one-carbon metabolism; tetrahydrofolate interconversion. Its function is as follows. Catalyzes the oxidation of 5,10-methylenetetrahydrofolate to 5,10-methenyltetrahydrofolate and then the hydrolysis of 5,10-methenyltetrahydrofolate to 10-formyltetrahydrofolate. This is Bifunctional protein FolD from Clostridium botulinum (strain Eklund 17B / Type B).